The following is a 949-amino-acid chain: Collagen alpha-2(I) chain (949 aa).

The disordered stretch occupies residues 1–949; sequence SGGFDFSFLP…FGYEGDFYRA (949 aa). 4-hydroxyproline is present on residues Pro-10, Pro-13, Pro-34, and Pro-40. Over residues 27–66 the composition is skewed to low complexity; that stretch reads LMGPRGPPGASGAPGPQGFQGPAGEPGEPGQTGPAGARGP. 5-hydroxylysine; alternate is present on Lys-95. Residue Lys-95 is glycosylated (O-linked (Gal...) hydroxylysine; alternate). Low complexity-rich tracts occupy residues 147 to 162 and 208 to 229; these read SVGPVGPAGPIGSAGP and PGANGLTGAKGAAGLPGVAGAP. The segment covering 263–272 has biased composition (gly residues); that stretch reads GESGGKGEPG. A compositionally biased stretch (low complexity) spans 273–283; the sequence is SAGPQGPPGSS. The span at 292–313 shows a compositional bias: gly residues; it reads NGEGSTGPTGPPGLRGGPGSRG. 4-hydroxyproline occurs at positions 348 and 351. The segment covering 377 to 396 has biased composition (low complexity); that stretch reads LPGIDGRPGPIGPAGARGEA. Gly residues predominate over residues 435–444; the sequence is GVQGGKGEQG. 2 stretches are compositionally biased toward low complexity: residues 490–507 and 519–529; these read PGESGAVGPSGAIGSRGP and EPGVVGAPGTA. Residues 530 to 539 show a composition bias toward gly residues; the sequence is GPAGSGGLPG. Low complexity-rich tracts occupy residues 562 to 606 and 613 to 633; these read VGTT…PRGS and VGPAGPNGFAGPAGAAGQPGA. A compositionally biased stretch (basic and acidic residues) spans 634 to 643; that stretch reads KGERGTKGPK. Residues 651–661 are compositionally biased toward low complexity; sequence PTGPVGSAGPA. The segment covering 671–680 has biased composition (gly residues); it reads GSRGDGGPPG. Over residues 682–691 the composition is skewed to low complexity; it reads TGFPGAAGRT. Residues 722-736 show a composition bias toward gly residues; the sequence is GPVGRGETGAGGPPG. Composition is skewed to low complexity over residues 737–771, 779–792, and 810–825; these read FTGEKGPSGEPGTAGPPGTAGPQGLLGAPGILGLP, LPGVAGAVGEPGPL, and EPGPVGSVGPVGALGP. A compositionally biased stretch (basic and acidic residues) spans 835-846; that stretch reads RGDKGEPGEKGP. The span at 921 to 931 shows a compositional bias: pro residues; that stretch reads PAGPPGPPGPP.

It belongs to the fibrillar collagen family. In terms of assembly, trimers of one alpha 2(I) and two alpha 1(I) chains. Interacts (via C-terminus) with TMEM131 (via PapD-L domain); the interaction is direct and is involved in assembly and TRAPPIII ER-to-Golgi transport complex-dependent secretion of collagen. Post-translationally, prolines at the third position of the tripeptide repeating unit (G-X-Y) are hydroxylated in some or all of the chains. Expressed in bones.

Its subcellular location is the secreted. It is found in the extracellular space. The protein localises to the extracellular matrix. Functionally, type I collagen is a member of group I collagen (fibrillar forming collagen). In Acratocnus ye (Hispaniolan ground sloth), this protein is Collagen alpha-2(I) chain.